A 569-amino-acid polypeptide reads, in one-letter code: Phosphoglucomutase 2 (569 aa).

Residues methionine 1–leucine 23 are disordered. Residue serine 2 is modified to N-acetylserine. Residue arginine 24 participates in alpha-D-glucose 1,6-bisphosphate binding. Phosphothreonine occurs at positions 111 and 117. Serine 119 lines the alpha-D-glucose 1,6-bisphosphate pocket. The active-site Phosphoserine intermediate is serine 119. Serine 119, aspartate 290, aspartate 292, and aspartate 294 together coordinate Mg(2+). A Phosphoserine modification is found at serine 119. Aspartate 294, arginine 295, threonine 359, glutamate 378, serine 380, and lysine 391 together coordinate alpha-D-glucose 1,6-bisphosphate.

Belongs to the phosphohexose mutase family. Monomer. Requires Mg(2+) as cofactor. Zn(2+) serves as cofactor. In terms of processing, O-glycosylated with mannose residues. Substrate of UDP-glucose--glycoprotein glucose phosphotransferase, linking glucose in a phosphodiester linkage to O-linked mannose.

The protein localises to the cytoplasm. It carries out the reaction alpha-D-glucose 1-phosphate = alpha-D-glucose 6-phosphate. It catalyses the reaction O-phospho-L-seryl-[protein] + alpha-D-glucose 1-phosphate = alpha-D-glucose 1,6-bisphosphate + L-seryl-[protein]. The enzyme catalyses alpha-D-glucose 1,6-bisphosphate + L-seryl-[protein] = O-phospho-L-seryl-[protein] + alpha-D-glucose 6-phosphate. Major phosphoglucomutase isozyme that catalyzes the reversible isomerization of alpha-D-glucose 1-phosphate to alpha-D-glucose 6-phosphate. The mechanism proceeds via the intermediate compound alpha-D-glucose 1,6-bisphosphate. Constitutes about 80-90% of the phosphoglucomutase activity in the cell. Key enzyme in hexose metabolism. The forward reaction is an essential step in the energy metabolism of galactose since the product of the galactose pathway enzymes in yeast is glucose 1-phosphate. The reverse reaction is an essential step for biosynthesis when carbon sources other than galactose are the energy source because glucose 1-phosphate is the starting point for the synthesis of UDP-glucose, which acts as a precursor for the synthesis of oligosaccharides and trehalose. This is Phosphoglucomutase 2 from Saccharomyces cerevisiae (strain ATCC 204508 / S288c) (Baker's yeast).